The following is a 229-amino-acid chain: 3-dehydroquinate dehydratase (229 aa).

3-dehydroquinate contacts are provided by residues 29 to 31 (ELR) and R56. H120 serves as the catalytic Proton donor/acceptor. The active-site Schiff-base intermediate with substrate is the K146. 3-dehydroquinate-binding residues include R187, T208, and Q212.

Belongs to the type-I 3-dehydroquinase family. As to quaternary structure, homodimer.

It carries out the reaction 3-dehydroquinate = 3-dehydroshikimate + H2O. The protein operates within metabolic intermediate biosynthesis; chorismate biosynthesis; chorismate from D-erythrose 4-phosphate and phosphoenolpyruvate: step 3/7. Functionally, involved in the third step of the chorismate pathway, which leads to the biosynthesis of aromatic amino acids. Catalyzes the cis-dehydration of 3-dehydroquinate (DHQ) and introduces the first double bond of the aromatic ring to yield 3-dehydroshikimate. This chain is 3-dehydroquinate dehydratase, found in Haloarcula marismortui (strain ATCC 43049 / DSM 3752 / JCM 8966 / VKM B-1809) (Halobacterium marismortui).